The following is a 216-amino-acid chain: Thiamine-phosphate synthase (216 aa).

4-amino-2-methyl-5-(diphosphooxymethyl)pyrimidine is bound by residues 39 to 43 (QLRRK) and Asn-71. Mg(2+) contacts are provided by Asp-72 and Asp-91. Ser-109 lines the 4-amino-2-methyl-5-(diphosphooxymethyl)pyrimidine pocket. A 2-[(2R,5Z)-2-carboxy-4-methylthiazol-5(2H)-ylidene]ethyl phosphate-binding site is contributed by 136–138 (SPT). Position 139 (Lys-139) interacts with 4-amino-2-methyl-5-(diphosphooxymethyl)pyrimidine. Residues Gly-172 and 192–193 (IT) contribute to the 2-[(2R,5Z)-2-carboxy-4-methylthiazol-5(2H)-ylidene]ethyl phosphate site.

Belongs to the thiamine-phosphate synthase family. The cofactor is Mg(2+).

The enzyme catalyses 2-[(2R,5Z)-2-carboxy-4-methylthiazol-5(2H)-ylidene]ethyl phosphate + 4-amino-2-methyl-5-(diphosphooxymethyl)pyrimidine + 2 H(+) = thiamine phosphate + CO2 + diphosphate. It catalyses the reaction 2-(2-carboxy-4-methylthiazol-5-yl)ethyl phosphate + 4-amino-2-methyl-5-(diphosphooxymethyl)pyrimidine + 2 H(+) = thiamine phosphate + CO2 + diphosphate. It carries out the reaction 4-methyl-5-(2-phosphooxyethyl)-thiazole + 4-amino-2-methyl-5-(diphosphooxymethyl)pyrimidine + H(+) = thiamine phosphate + diphosphate. It functions in the pathway cofactor biosynthesis; thiamine diphosphate biosynthesis; thiamine phosphate from 4-amino-2-methyl-5-diphosphomethylpyrimidine and 4-methyl-5-(2-phosphoethyl)-thiazole: step 1/1. Condenses 4-methyl-5-(beta-hydroxyethyl)thiazole monophosphate (THZ-P) and 2-methyl-4-amino-5-hydroxymethyl pyrimidine pyrophosphate (HMP-PP) to form thiamine monophosphate (TMP). This Bordetella avium (strain 197N) protein is Thiamine-phosphate synthase.